Consider the following 727-residue polypeptide: Phosphoribosylformylglycinamidine synthase subunit PurL (727 aa).

His-47 is a catalytic residue. ATP contacts are provided by Tyr-50 and Lys-89. Position 91 (Glu-91) interacts with Mg(2+). Residues 92-95 (SHNH) and Arg-114 contribute to the substrate site. The active-site Proton acceptor is the His-93. Mg(2+) is bound at residue Asp-115. Gln-238 contacts substrate. Asp-266 contacts Mg(2+). A substrate-binding site is contributed by 310–312 (ESQ). Residues Asp-490 and Gly-527 each contribute to the ATP site. Asn-528 contributes to the Mg(2+) binding site. A substrate-binding site is contributed by Ser-530.

The protein belongs to the FGAMS family. In terms of assembly, monomer. Part of the FGAM synthase complex composed of 1 PurL, 1 PurQ and 2 PurS subunits.

The protein localises to the cytoplasm. It carries out the reaction N(2)-formyl-N(1)-(5-phospho-beta-D-ribosyl)glycinamide + L-glutamine + ATP + H2O = 2-formamido-N(1)-(5-O-phospho-beta-D-ribosyl)acetamidine + L-glutamate + ADP + phosphate + H(+). It functions in the pathway purine metabolism; IMP biosynthesis via de novo pathway; 5-amino-1-(5-phospho-D-ribosyl)imidazole from N(2)-formyl-N(1)-(5-phospho-D-ribosyl)glycinamide: step 1/2. Functionally, part of the phosphoribosylformylglycinamidine synthase complex involved in the purines biosynthetic pathway. Catalyzes the ATP-dependent conversion of formylglycinamide ribonucleotide (FGAR) and glutamine to yield formylglycinamidine ribonucleotide (FGAM) and glutamate. The FGAM synthase complex is composed of three subunits. PurQ produces an ammonia molecule by converting glutamine to glutamate. PurL transfers the ammonia molecule to FGAR to form FGAM in an ATP-dependent manner. PurS interacts with PurQ and PurL and is thought to assist in the transfer of the ammonia molecule from PurQ to PurL. This Acidiphilium cryptum (strain JF-5) protein is Phosphoribosylformylglycinamidine synthase subunit PurL.